The chain runs to 380 residues: Deoxyguanosinetriphosphate triphosphohydrolase-like protein (380 aa).

Residues 1–28 (MYAPYATMPDRSRGRAVPEEESSFRSPF) are disordered. The 137-residue stretch at 62–198 (RLTHSIEVGQ…AALADDIAYN (137 aa)) folds into the HD domain.

The protein belongs to the dGTPase family. Type 2 subfamily.

The protein is Deoxyguanosinetriphosphate triphosphohydrolase-like protein of Ruegeria sp. (strain TM1040) (Silicibacter sp.).